We begin with the raw amino-acid sequence, 230 residues long: Metaxin-2 homolog (230 aa).

The protein belongs to the metaxin family. Associates with the mitochondrial contact site and cristae organizing system (MICOS) complex (also known as MINOS or MitOS complex).

The protein resides in the mitochondrion outer membrane. In terms of biological role, involved in transport of proteins into the mitochondrion. In Caenorhabditis elegans, this protein is Metaxin-2 homolog (mtx-2).